We begin with the raw amino-acid sequence, 281 residues long: MIENRRGLDIFCHVMLIIGVLLILFPLYVAFVAASLDDTQVFQVPMTLIPGPHLWQNISHIWHAGVGNNSAPFGLMLFNSFVMAFAITVGKITVSMLSAYAIVYFRFPLRNLFFWLIFLTLMLPVEVRIFPTIQVIANLNMLDSYTGLTLPLMASATATFLFRQFFMTLPDELLEAARIDGAGAMRFFWDIVLPLSKTNLAALFVITFIYGWNQYLWPILITSDASMGTAVAGIRSMISSSGAPTQWNQVMAAMILTLIPPVAVVLLMQRWFVRGLVDSEK.

6 consecutive transmembrane segments (helical) span residues 14–34 (VMLI…FVAA), 82–104 (VMAF…AIVY), 113–133 (FFWL…FPTI), 142–162 (LDSY…TFLF), 188–210 (FWDI…TFIY), and 247–267 (WNQV…VVLL). In terms of domain architecture, ABC transmembrane type-1 spans 77-268 (LFNSFVMAFA…IPPVAVVLLM (192 aa)).

Belongs to the binding-protein-dependent transport system permease family. UgpAE subfamily. The complex is composed of two ATP-binding proteins (UgpC), two transmembrane proteins (UgpA and UgpE) and a solute-binding protein (UgpB).

Its subcellular location is the cell inner membrane. Part of the ABC transporter complex UgpBAEC involved in sn-glycerol-3-phosphate (G3P) import. Probably responsible for the translocation of the substrate across the membrane. In Yersinia enterocolitica serotype O:8 / biotype 1B (strain NCTC 13174 / 8081), this protein is sn-glycerol-3-phosphate transport system permease protein UgpE (ugpE).